The sequence spans 349 residues: Isopentenyl-diphosphate delta-isomerase (349 aa).

6–7 (RK) is a binding site for substrate. Residues 62-64 (AMT), serine 93, and asparagine 122 each bind FMN. A substrate-binding site is contributed by glutamine 152. Glutamate 153 lines the Mg(2+) pocket. FMN contacts are provided by residues lysine 184, threonine 214, 258–259 (GG), and 280–281 (AG).

This sequence belongs to the IPP isomerase type 2 family. In terms of assembly, homooctamer. Dimer of tetramers. FMN is required as a cofactor. NADPH serves as cofactor. Requires Mg(2+) as cofactor.

It localises to the cytoplasm. The catalysed reaction is isopentenyl diphosphate = dimethylallyl diphosphate. In terms of biological role, involved in the biosynthesis of isoprenoids. Catalyzes the 1,3-allylic rearrangement of the homoallylic substrate isopentenyl (IPP) to its allylic isomer, dimethylallyl diphosphate (DMAPP). This is Isopentenyl-diphosphate delta-isomerase from Bacillus subtilis (strain 168).